Reading from the N-terminus, the 99-residue chain is Large ribosomal subunit protein uL23 (99 aa).

The protein belongs to the universal ribosomal protein uL23 family. As to quaternary structure, part of the 50S ribosomal subunit. Contacts protein L29, and trigger factor when it is bound to the ribosome.

Its function is as follows. One of the early assembly proteins it binds 23S rRNA. One of the proteins that surrounds the polypeptide exit tunnel on the outside of the ribosome. Forms the main docking site for trigger factor binding to the ribosome. The polypeptide is Large ribosomal subunit protein uL23 (Shewanella sediminis (strain HAW-EB3)).